Reading from the N-terminus, the 426-residue chain is Protein arginine methyltransferase NDUFAF7 homolog, mitochondrial (426 aa).

It belongs to the NDUFAF7 family.

It localises to the mitochondrion. The catalysed reaction is L-arginyl-[protein] + 2 S-adenosyl-L-methionine = N(omega),N(omega)'-dimethyl-L-arginyl-[protein] + 2 S-adenosyl-L-homocysteine + 2 H(+). In terms of biological role, arginine methyltransferase involved in the assembly or stability of mitochondrial NADH:ubiquinone oxidoreductase complex (complex I). This Caenorhabditis elegans protein is Protein arginine methyltransferase NDUFAF7 homolog, mitochondrial.